The following is a 467-amino-acid chain: MSKGTLFDKVWDAHTVQILPSGQTQLFIGLHLIHEVTSPQAFAMLRERGLTVLYPDRTVATVDHIVPTEDQARPFVDTLAEEMMQALENSAKENGIRFYNIGSGNQGIVHVIAPEQGLTQPGMTIACGDSHTSTHGAFGAIAFGIGTSQVRDVLASQTLALSKLKVRKIEVNGTLPPGVYAKDVILHIIRKLGVKGGVGYAYEYAGTTFANMSMEERMTVCNMSIEGGARCGYINPDDITFDYLKGRDFAPTGDDWDKAVTWWRSMASDADAEYDDVVTFDASDIEPTVTWGITPGQGIGISEPVPTPESLPESDRAIAQEAYSYMQLSPGTPIKGTKVDVCFIGSCTNGRISDLREAAKFAKGHHVANGVKAFVVPGSERVKVQAEAEGLHKIFLEAGFEWREAGCSMCLAMNPDKLQGDQISASSSNRNFKGRQGSSTGRTLLMSPAMVVAAAVNGKVSDVRELS.

[4Fe-4S] cluster is bound by residues cysteine 347, cysteine 407, and cysteine 410.

This sequence belongs to the aconitase/IPM isomerase family. LeuC type 1 subfamily. Heterodimer of LeuC and LeuD. The cofactor is [4Fe-4S] cluster.

The enzyme catalyses (2R,3S)-3-isopropylmalate = (2S)-2-isopropylmalate. The protein operates within amino-acid biosynthesis; L-leucine biosynthesis; L-leucine from 3-methyl-2-oxobutanoate: step 2/4. Functionally, catalyzes the isomerization between 2-isopropylmalate and 3-isopropylmalate, via the formation of 2-isopropylmaleate. In Crocosphaera subtropica (strain ATCC 51142 / BH68) (Cyanothece sp. (strain ATCC 51142)), this protein is 3-isopropylmalate dehydratase large subunit.